The primary structure comprises 208 residues: Small ribosomal subunit protein uS4 (208 aa).

The region spanning 95 to 157 (RRIDNIVYRA…DSLKKLVRSN (63 aa)) is the S4 RNA-binding domain.

This sequence belongs to the universal ribosomal protein uS4 family. In terms of assembly, part of the 30S ribosomal subunit. Contacts protein S5. The interaction surface between S4 and S5 is involved in control of translational fidelity.

Functionally, one of the primary rRNA binding proteins, it binds directly to 16S rRNA where it nucleates assembly of the body of the 30S subunit. In terms of biological role, with S5 and S12 plays an important role in translational accuracy. In Borrelia duttonii (strain Ly), this protein is Small ribosomal subunit protein uS4.